Reading from the N-terminus, the 355-residue chain is UDP-glucose 4-epimerase uge1 (355 aa).

8–39 (TVLVTGGAGYIGSHTCVVLLEKGYDVVIVDNL) lines the NAD(+) pocket.

Belongs to the NAD(P)-dependent epimerase/dehydratase family. NAD(+) serves as cofactor.

It catalyses the reaction UDP-alpha-D-glucose = UDP-alpha-D-galactose. It functions in the pathway carbohydrate metabolism; galactose metabolism. Functionally, major UDP-glucose/-galactose 4-epimerase under glucose-rich conditions involved in protein galactosylation. The protein is UDP-glucose 4-epimerase uge1 (uge1) of Schizosaccharomyces pombe (strain 972 / ATCC 24843) (Fission yeast).